The primary structure comprises 358 residues: Peptide chain release factor 1 (358 aa).

N5-methylglutamine is present on Q234. Positions 283–306 are disordered; that stretch reads ERLHSERAGQRKSMVGSGDRSERI.

Belongs to the prokaryotic/mitochondrial release factor family. Post-translationally, methylated by PrmC. Methylation increases the termination efficiency of RF1.

It is found in the cytoplasm. Functionally, peptide chain release factor 1 directs the termination of translation in response to the peptide chain termination codons UAG and UAA. In Zymomonas mobilis subsp. mobilis (strain ATCC 31821 / ZM4 / CP4), this protein is Peptide chain release factor 1.